The chain runs to 247 residues: NAD-dependent protein deacetylase (247 aa).

A Deacetylase sirtuin-type domain is found at 1 to 244; sequence MIYEKVAEEL…PKILENVRQK (244 aa). NAD(+) contacts are provided by Ala22, Thr26, Phe33, Arg34, Gln98, Ile100, Asp101, and His116. Phe33 is a nicotinamide binding site. Residues Ile100 and Asp101 each coordinate nicotinamide. His116 acts as the Proton acceptor in catalysis. The Zn(2+) site is built by Cys124, Cys127, Cys149, and Cys151. NAD(+) contacts are provided by Ser187, Ser188, Asn212, and Val230.

This sequence belongs to the sirtuin family. Class U subfamily. Monomer. Requires Zn(2+) as cofactor.

It localises to the cytoplasm. It catalyses the reaction N(6)-acetyl-L-lysyl-[protein] + NAD(+) + H2O = 2''-O-acetyl-ADP-D-ribose + nicotinamide + L-lysyl-[protein]. NAD-dependent protein deacetylase which modulates the activities of several enzymes which are inactive in their acetylated form. Deacetylates the N-terminal lysine residue of albA1, the major archaeal DNA compaction protein and that, in turn, increases albA1's DNA binding affinity, thereby repressing transcription. In Saccharolobus solfataricus (strain ATCC 35092 / DSM 1617 / JCM 11322 / P2) (Sulfolobus solfataricus), this protein is NAD-dependent protein deacetylase.